A 3313-amino-acid polypeptide reads, in one-letter code: Cadherin EGF LAG seven-pass G-type receptor 3 (3313 aa).

The first 31 residues, 1–31, serve as a signal peptide directing secretion; that stretch reads MARRPLWWGLPGPSTPLLLLLLFSLFPSSRE. Residues 32-2538 are Extracellular-facing; the sequence is EMGGGGDQGW…RLEGDLELLA (2507 aa). Disordered regions lie at residues 148-187 and 205-269; these read LPLD…RNGR and EPGH…RMRS. The segment covering 258–268 has biased composition (basic and acidic residues); it reads HESRTAPERMR. Cadherin domains follow at residues 317–424, 425–536, 537–642, 643–747, 748–849, 850–952, 953–1058, 1059–1160, and 1161–1257; these read PQYN…APVF, EQAQ…APQF, SEKR…SPIF, VSTP…RPEF, TMKE…RPVF, QSAH…APQF, VASH…APVF, PAEE…SPVL, and NNFQ…VVII. The N-linked (GlcNAc...) asparagine glycan is linked to N623. N838 carries an N-linked (GlcNAc...) asparagine glycan. N-linked (GlcNAc...) asparagine glycans are attached at residues N1173, N1213, N1308, and N1318. One can recognise an EGF-like 1; calcium-binding domain in the interval 1366-1424; the sequence is DDNVCLREPCENYMKCVSVLRFDSSAPFLASASTLFRPIQPIAGLRCRCPPGFTGDFCE. Cystine bridges form between C1370/C1381, C1375/C1412, C1414/C1423, C1430/C1441, C1435/C1450, C1452/C1461, C1470/C1481, C1475/C1491, and C1493/C1504. In terms of domain architecture, EGF-like 2; calcium-binding spans 1426-1462; it reads ELDLCYSNPCRNGGACARREGGYTCVCRPRFTGEDCE. An EGF-like 3; calcium-binding domain is found at 1466 to 1505; the sequence is EAGRCVPGVCRNGGTCTNAPNGGFRCQCPAGGAFEGPRCE. The 205-residue stretch at 1506–1710 folds into the Laminin G-like 1 domain; the sequence is VAARSFPPSS…VANNGTTAGC (205 aa). N-linked (GlcNAc...) asparagine glycans are attached at residues N1640 and N1704. 4 disulfides stabilise this stretch: C1684–C1710, C1717–C1728, C1722–C1737, and C1739–C1748. One can recognise an EGF-like 4; calcium-binding domain in the interval 1713-1749; the sequence is KSHFCASGPCKNGGLCSERWGGFSCDCPVGFGGKDCR. A Laminin G-like 2 domain is found at 1753 to 1935; the sequence is AHPYHFQGNG…SHRINVEPGC (183 aa). A glycan (N-linked (GlcNAc...) asparagine) is linked at N1761. 9 disulfides stabilise this stretch: C1906-C1935, C1941-C1952, C1946-C1961, C1963-C1972, C1976-C1987, C1981-C1999, C2001-C2010, C2018-C2031, and C2033-C2043. Residues 1937–1972 enclose the EGF-like 5; calcium-binding domain; it reads VTNPCASGPCPPHANCKDLWQTFSCTCWPGYYGPGC. D1954 carries the post-translational modification (3R)-3-hydroxyaspartate. Residues 1973-2011 enclose the EGF-like 6; calcium-binding domain; that stretch reads VDACLLNPCQNQGSCRHLQGGPHGYTCDCASGYFGQHCE. An EGF-like 7; calcium-binding domain is found at 2012-2044; the sequence is HRMDQQCPRGWWGSPTCGPCNCDVHKGFDPNCN. N2044 is a glycosylation site (N-linked (GlcNAc...) asparagine). Residues 2046-2081 enclose the EGF-like 8; calcium-binding domain; the sequence is TSGQCHCKEFHYRPRGSDSCLPCDCYPVGSTSRSCA. Intrachain disulfides connect C2050–C2065, C2052–C2068, C2070–C2080, C2089–C2098, and C2101–C2113. The region spanning 2068–2115 is the Laminin EGF-like domain; that stretch reads CDCYPVGSTSRSCAPHSGQCPCRPGALGRQCNSCDSPFAEVTASGCRV. Phosphotyrosine is present on Y2117. Residues N2173, N2192, N2382, N2472, and N2504 are each glycosylated (N-linked (GlcNAc...) asparagine). The disordered stretch occupies residues 2356–2395; sequence HTHVLLPSQSPQPSPSEVLPTSSNAENATASGVVSPPAPL. The GAIN-B domain occupies 2364 to 2528; that stretch reads QSPQPSPSEV…GVLMDASPRE (165 aa). Polar residues predominate over residues 2374–2387; that stretch reads LPTSSNAENATASG. 2 disulfide bridges follow: C2478/C2510 and C2498/C2512. The interval 2478 to 2528 is GPS; sequence CVQWDPPGPADQHGMWTARDCELVHRNGSHARCRCSRTGTFGVLMDASPRE. Residues 2539–2559 traverse the membrane as a helical segment; that stretch reads VFTHVVVAASVTALVLTAAVL. Over 2560 to 2570 the chain is Cytoplasmic; it reads LSLRSLKSNVR. The helical transmembrane segment at 2571–2591 threads the bilayer; it reads GIHANVAAALGVAELLFLLGI. At 2592–2599 the chain is on the extracellular side; sequence HRTHNQLL. The chain crosses the membrane as a helical span at residues 2600-2620; the sequence is CTVVAILLHYFFLSTFAWLLV. Topologically, residues 2621–2641 are cytoplasmic; it reads QGLHLYRMQVEPRNVDRGAMR. The chain crosses the membrane as a helical span at residues 2642–2662; the sequence is FYHALGWGVPAVLLGLAVGLD. The Extracellular segment spans residues 2663 to 2679; sequence PEGYGNPDFCWISIHEP. Residues 2680–2700 form a helical membrane-spanning segment; it reads LIWSFAGPIVLVIVMNGIMFL. Residues 2701 to 2724 lie on the Cytoplasmic side of the membrane; that stretch reads LAARTSCSTGQREAKKTSVLRTLR. Residues 2725–2745 traverse the membrane as a helical segment; it reads SSFLLLLLVSASWLFGLLAVN. The Extracellular segment spans residues 2746–2752; the sequence is HSVLAFH. The helical transmembrane segment at 2753 to 2773 threads the bilayer; it reads YLHAGLCGLQGLAVLLLFCVL. Over 2774 to 3313 the chain is Cytoplasmic; it reads NADARAAWTP…SEVPRSEGHS (540 aa). Disordered regions lie at residues 2887–2927 and 2977–3004; these read AGAD…RPLR and SNKD…RAQR. The segment covering 2889 to 2899 has biased composition (acidic residues); that stretch reads ADSDSDSDLSL. The segment covering 2918 to 2927 has biased composition (basic residues); sequence TRGRFQRPLR. Y3050 is subject to Phosphotyrosine. 2 disordered regions span residues 3091 to 3242 and 3255 to 3313; these read APVL…PSTE and NSSA…EGHS. At S3098 the chain carries Phosphoserine. Residues 3102–3119 are compositionally biased toward basic and acidic residues; it reads SQERLDTAPARLEPRDRG. 2 stretches are compositionally biased toward low complexity: residues 3178–3197 and 3255–3289; these read QRPL…SLSR and NSSA…PSTP. Residues 3290–3301 are compositionally biased toward polar residues; the sequence is RSATSHSISELS.

The protein belongs to the G-protein coupled receptor 2 family. LN-TM7 subfamily. The iron and 2-oxoglutarate dependent 3-hydroxylation of aspartate and asparagine is (R) stereospecific within EGF domains. In terms of tissue distribution, expressed in the brain. Expressed in cerebellum, olfactory bulb, cerebral cortex, hippocampus and brain stem.

Its subcellular location is the cell membrane. Its function is as follows. Receptor that may have an important role in cell/cell signaling during nervous system formation. This is Cadherin EGF LAG seven-pass G-type receptor 3 (Celsr3) from Rattus norvegicus (Rat).